Here is a 316-residue protein sequence, read N- to C-terminus: Taste receptor type 2 member 3 (316 aa).

Topologically, residues 1–6 are extracellular; that stretch reads MMGLTE. The helical transmembrane segment at 7–27 threads the bilayer; it reads GVFLILSGTQFTLGILVNCFI. Over 28 to 42 the chain is Cytoplasmic; the sequence is ELVNGSSWFKTKRMS. Residues 43–63 traverse the membrane as a helical segment; that stretch reads LSDFIITTLALLRIILLCIIL. Residues 64–94 are Extracellular-facing; that stretch reads TDSFLIEFSPNTHDSGIIMQIIDVSWTFTNH. Residues 95-115 form a helical membrane-spanning segment; that stretch reads LSIWLATCLGVLYCLKIASFS. Topologically, residues 116-128 are cytoplasmic; it reads HPTFLWLKWRVSR. A helical membrane pass occupies residues 129–149; the sequence is VMVWMLLGALLLSCGSTASLI. Residues 150-186 lie on the Extracellular side of the membrane; it reads NEFKLYSVFRGIEATRNVTEHFRKKRSEYYLIHVLGT. A glycan (N-linked (GlcNAc...) asparagine) is linked at N166. A helical membrane pass occupies residues 187-207; the sequence is LWYLPPLIVSLASYSLLIFSL. The Cytoplasmic segment spans residues 208-234; that stretch reads GRHTRQMLQNGTSSRDPTTEAHKRAIR. A helical membrane pass occupies residues 235–255; sequence IILSFFFLFLLYFLAFLIASF. Topologically, residues 256–266 are extracellular; that stretch reads GNFLPKTKMAK. The chain crosses the membrane as a helical span at residues 267-287; that stretch reads MIGEVMTMFYPAGHSFILILG. The Cytoplasmic portion of the chain corresponds to 288-316; that stretch reads NSKLKQTFVVMLRCESGHLKPGSKGPIFS.

The protein belongs to the G-protein coupled receptor T2R family. Expressed in subsets of taste receptor cells of the tongue and palate epithelium and exclusively in gustducin-positive cells. Expressed in the antrum and fundus (part of the stomach), duodenum and in gastric endocrine cells.

It localises to the membrane. Its function is as follows. Gustducin-coupled receptor implicated in the perception of bitter compounds in the oral cavity and the gastrointestinal tract. Signals through PLCB2 and the calcium-regulated cation channel TRPM5. This Homo sapiens (Human) protein is Taste receptor type 2 member 3 (TAS2R3).